A 327-amino-acid polypeptide reads, in one-letter code: Putative ABC transporter ATP-binding protein MM_0887 (327 aa).

The tract at residues 1 to 44 (MSKSTPLKSSIIRADLPEQAEGRTGPETGKDPEKTGNSEGKTDT) is disordered. Residues 28–44 (TGKDPEKTGNSEGKTDT) show a composition bias toward basic and acidic residues. The ABC transporter domain maps to 47 to 282 (IEIKDLCHRY…PALLRKAHLR (236 aa)). 81–88 (GANGAGKS) provides a ligand contact to ATP.

Belongs to the ABC transporter superfamily.

The protein localises to the cell membrane. Probably part of an ABC transporter complex. Responsible for energy coupling to the transport system. The protein is Putative ABC transporter ATP-binding protein MM_0887 of Methanosarcina mazei (strain ATCC BAA-159 / DSM 3647 / Goe1 / Go1 / JCM 11833 / OCM 88) (Methanosarcina frisia).